Consider the following 364-residue polypeptide: MELFKYMEKYDYEQLVFCQDEQSGLKAIIAIHDTTLGPALGGTRMWTYENEEAAIEDALRLARGMTYKNAAAGLNLGGGKTVIIGDPRKDKNEEMFRAFGRYIQGLNGRYITAEDVGTTVEDMDIIHDETDYVTGISPAFGSSGNPSPVTAYGVYRGMKAAAKAAFGTDSLEGKTIAVQGVGNVAYNLCRHLHEEGANLIVTDINKQSVQRAVEDFGARAVDPDDIYSQDCDIYAPCALGATINDDTIKQLKAKVIAGAANNQLKETRHGDQIHEMGIVYAPDYVINAGGVINVADELYGYNAERALKKVEGIYGNIERVLEISQRDGIPAYLAADRLAEERIERMRRSRSQFLQNGHSVLSRR.

Residue Lys80 is part of the active site. 180 to 186 (GVGNVAY) lines the NAD(+) pocket.

It belongs to the Glu/Leu/Phe/Val dehydrogenases family.

It catalyses the reaction L-leucine + NAD(+) + H2O = 4-methyl-2-oxopentanoate + NH4(+) + NADH + H(+). It functions in the pathway amino-acid degradation; L-leucine degradation; 4-methyl-2-oxopentanoate from L-leucine (dehydrogenase route): step 1/1. In terms of biological role, catalyzes the reversible deamination of L-leucine to 4-methyl-2-oxopentanoate. The sequence is that of Leucine dehydrogenase (yqiT) from Bacillus subtilis (strain 168).